The following is a 372-amino-acid chain: Envelope phospholipase OPG057 (372 aa).

The short motif at 153–156 (YPPL) is the YPPL element. S-palmitoyl cysteine; by host attachment occurs at residues Cys-185 and Cys-186. The 28-residue stretch at 307–334 (FTIQNNTKLLIVDDEYVHITSANFDGTH) folds into the PLD phosphodiesterase domain.

Belongs to the orthopoxvirus OPG057 family. In terms of assembly, interacts with protein OPG190. Palmitoylated. Attachment of the palmitate moiety is essential for correct intracellular targeting and protein function.

It is found in the virion membrane. The protein resides in the host Golgi apparatus. It localises to the host trans-Golgi network. The protein localises to the host endoplasmic reticulum membrane. The enzyme catalyses a 1,2-diacyl-sn-glycero-3-phosphocholine + H2O = a 1,2-diacyl-sn-glycero-3-phosphate + choline + H(+). Functionally, major envelope protein that plays a role in the biogenesis of the viral double membrane and in egress of virus from the host cell. Produces the wrapped form of virus that is required for cell-to-cell spread. Acts as a lipase with broad specificity including phospholipase C, phospholipase A, and triacylglycerol lipase activities. In Cynomys gunnisoni (Gunnison's prairie dog), this protein is Envelope phospholipase OPG057 (OPG057).